A 353-amino-acid chain; its full sequence is Phosphate acyltransferase (353 aa).

It belongs to the PlsX family. Homodimer. Probably interacts with PlsY.

It is found in the cytoplasm. It carries out the reaction a fatty acyl-[ACP] + phosphate = an acyl phosphate + holo-[ACP]. Its pathway is lipid metabolism; phospholipid metabolism. Catalyzes the reversible formation of acyl-phosphate (acyl-PO(4)) from acyl-[acyl-carrier-protein] (acyl-ACP). This enzyme utilizes acyl-ACP as fatty acyl donor, but not acyl-CoA. This Bradyrhizobium sp. (strain BTAi1 / ATCC BAA-1182) protein is Phosphate acyltransferase.